Here is a 323-residue protein sequence, read N- to C-terminus: tRNA dimethylallyltransferase (323 aa).

12 to 19 (GPTAAGKT) is an ATP binding site. Residue 14–19 (TAAGKT) participates in substrate binding. Interaction with substrate tRNA regions lie at residues 37–40 (DSAL) and 161–165 (QRLIR).

The protein belongs to the IPP transferase family. In terms of assembly, monomer. Requires Mg(2+) as cofactor.

It catalyses the reaction adenosine(37) in tRNA + dimethylallyl diphosphate = N(6)-dimethylallyladenosine(37) in tRNA + diphosphate. In terms of biological role, catalyzes the transfer of a dimethylallyl group onto the adenine at position 37 in tRNAs that read codons beginning with uridine, leading to the formation of N6-(dimethylallyl)adenosine (i(6)A). In Pseudomonas putida (strain ATCC 47054 / DSM 6125 / CFBP 8728 / NCIMB 11950 / KT2440), this protein is tRNA dimethylallyltransferase.